A 149-amino-acid chain; its full sequence is MKKNINVLLINGPNLNLLGDREKNIYGDKTLSCLINDLKKRSEILNISLNDIQSNAEHVIIEKIHSAKKEKIDYIIINPAAFTHTSIAIRDALIAVTIPFIEVHISNIYARENFRSHSWLSDISKGVITGLGLDGYFWALETISKRCCV.

Tyr26 serves as the catalytic Proton acceptor. Substrate-binding residues include Asn78, His84, and Asp91. His104 acts as the Proton donor in catalysis. Substrate contacts are provided by residues 105–106 (IS) and Arg115.

This sequence belongs to the type-II 3-dehydroquinase family. As to quaternary structure, homododecamer.

It catalyses the reaction 3-dehydroquinate = 3-dehydroshikimate + H2O. It participates in metabolic intermediate biosynthesis; chorismate biosynthesis; chorismate from D-erythrose 4-phosphate and phosphoenolpyruvate: step 3/7. Its function is as follows. Catalyzes a trans-dehydration via an enolate intermediate. This is 3-dehydroquinate dehydratase (aroQ) from Buchnera aphidicola subsp. Schizaphis graminum (strain Sg).